The following is a 143-amino-acid chain: Large ribosomal subunit protein uL15 (143 aa).

Positions 1-52 (MELNSIQPADGAKHYKRRVGRGIGSGLGKTSGRGHKGQKSRSGGFHKVGFEG) are disordered. Over residues 21-31 (RGIGSGLGKTS) the composition is skewed to gly residues.

It belongs to the universal ribosomal protein uL15 family. Part of the 50S ribosomal subunit.

Binds to the 23S rRNA. The chain is Large ribosomal subunit protein uL15 from Janthinobacterium sp. (strain Marseille) (Minibacterium massiliensis).